Reading from the N-terminus, the 459-residue chain is Plasma alpha-L-fucosidase (459 aa).

A signal peptide spans 1-23 (MRLGLLMFLPLLLLATRYRAVTA). N-linked (GlcNAc...) asparagine glycosylation is found at Asn-163 and Asn-231. A Phosphoserine modification is found at Ser-293. The N-linked (GlcNAc...) asparagine glycan is linked to Asn-369.

It belongs to the glycosyl hydrolase 29 family. As to quaternary structure, homotetramer.

It localises to the secreted. It catalyses the reaction an alpha-L-fucoside + H2O = L-fucose + an alcohol. Its function is as follows. Alpha-L-fucosidase is responsible for hydrolyzing the alpha-1,6-linked fucose joined to the reducing-end N-acetylglucosamine of the carbohydrate moieties of glycoproteins. This is Plasma alpha-L-fucosidase (Fuca2) from Rattus norvegicus (Rat).